Reading from the N-terminus, the 1296-residue chain is Phosphoribosylformylglycinamidine synthase (1296 aa).

Residues 304–323 (WPGAATGSGGEIRDEGATGR) are disordered. Residues 306 to 317 (GAATGSGGEIRD) and Ala-677 contribute to the ATP site. Residues Asp-678, Glu-717, Asn-721, and Asp-885 each contribute to the Mg(2+) site. Ser-887 lines the ATP pocket. Over residues 1000 to 1013 (PDCADQEHQAKQDE) the composition is skewed to basic and acidic residues. The segment at 1000 to 1019 (PDCADQEHQAKQDESDPGLN) is disordered. Residues 1043–1296 (VAVLREQGVN…MFRNARKQLG (254 aa)) form the Glutamine amidotransferase type-1 domain. Catalysis depends on Cys-1136, which acts as the Nucleophile. Residues His-1261 and Glu-1263 contribute to the active site.

In the N-terminal section; belongs to the FGAMS family. As to quaternary structure, monomer.

The protein resides in the cytoplasm. It catalyses the reaction N(2)-formyl-N(1)-(5-phospho-beta-D-ribosyl)glycinamide + L-glutamine + ATP + H2O = 2-formamido-N(1)-(5-O-phospho-beta-D-ribosyl)acetamidine + L-glutamate + ADP + phosphate + H(+). It participates in purine metabolism; IMP biosynthesis via de novo pathway; 5-amino-1-(5-phospho-D-ribosyl)imidazole from N(2)-formyl-N(1)-(5-phospho-D-ribosyl)glycinamide: step 1/2. Its function is as follows. Phosphoribosylformylglycinamidine synthase involved in the purines biosynthetic pathway. Catalyzes the ATP-dependent conversion of formylglycinamide ribonucleotide (FGAR) and glutamine to yield formylglycinamidine ribonucleotide (FGAM) and glutamate. This chain is Phosphoribosylformylglycinamidine synthase, found in Yersinia pseudotuberculosis serotype I (strain IP32953).